We begin with the raw amino-acid sequence, 130 residues long: Holo-[acyl-carrier-protein] synthase (130 aa).

Positions 9 and 58 each coordinate Mg(2+).

The protein belongs to the P-Pant transferase superfamily. AcpS family. Mg(2+) serves as cofactor.

Its subcellular location is the cytoplasm. The enzyme catalyses apo-[ACP] + CoA = holo-[ACP] + adenosine 3',5'-bisphosphate + H(+). In terms of biological role, transfers the 4'-phosphopantetheine moiety from coenzyme A to a Ser of acyl-carrier-protein. This chain is Holo-[acyl-carrier-protein] synthase, found in Mycobacterium tuberculosis (strain CDC 1551 / Oshkosh).